A 183-amino-acid chain; its full sequence is Small ribosomal subunit protein uS4c (183 aa).

Residues 82 to 143 (MRLDNILFRL…KQRSKALIQN (62 aa)) form the S4 RNA-binding domain.

This sequence belongs to the universal ribosomal protein uS4 family. As to quaternary structure, part of the 30S ribosomal subunit. Contacts protein S5. The interaction surface between S4 and S5 is involved in control of translational fidelity.

The protein localises to the plastid. It is found in the chloroplast. One of the primary rRNA binding proteins, it binds directly to 16S rRNA where it nucleates assembly of the body of the 30S subunit. Its function is as follows. With S5 and S12 plays an important role in translational accuracy. The sequence is that of Small ribosomal subunit protein uS4c (rps4) from Schizorhiza neglecta (Lapeirousia neglecta).